The following is a 218-amino-acid chain: ATP phosphoribosyltransferase (218 aa).

Belongs to the ATP phosphoribosyltransferase family. Short subfamily. Heteromultimer composed of HisG and HisZ subunits.

The protein resides in the cytoplasm. It catalyses the reaction 1-(5-phospho-beta-D-ribosyl)-ATP + diphosphate = 5-phospho-alpha-D-ribose 1-diphosphate + ATP. It participates in amino-acid biosynthesis; L-histidine biosynthesis; L-histidine from 5-phospho-alpha-D-ribose 1-diphosphate: step 1/9. Functionally, catalyzes the condensation of ATP and 5-phosphoribose 1-diphosphate to form N'-(5'-phosphoribosyl)-ATP (PR-ATP). Has a crucial role in the pathway because the rate of histidine biosynthesis seems to be controlled primarily by regulation of HisG enzymatic activity. This chain is ATP phosphoribosyltransferase, found in Trichormus variabilis (strain ATCC 29413 / PCC 7937) (Anabaena variabilis).